The sequence spans 560 residues: DNA ligase B (560 aa).

Catalysis depends on Lys-124, which acts as the N6-AMP-lysine intermediate.

It belongs to the NAD-dependent DNA ligase family. LigB subfamily.

It catalyses the reaction NAD(+) + (deoxyribonucleotide)n-3'-hydroxyl + 5'-phospho-(deoxyribonucleotide)m = (deoxyribonucleotide)n+m + AMP + beta-nicotinamide D-nucleotide.. Functionally, catalyzes the formation of phosphodiester linkages between 5'-phosphoryl and 3'-hydroxyl groups in double-stranded DNA using NAD as a coenzyme and as the energy source for the reaction. This Escherichia coli O81 (strain ED1a) protein is DNA ligase B.